The following is a 749-amino-acid chain: Dynamin-1-like protein (749 aa).

Met-1 carries the post-translational modification N-acetylmethionine. The 294-residue stretch at 22 to 315 (IIQLPQIVVV…LMHHIRDCLP (294 aa)) folds into the Dynamin-type G domain. The interval 32-39 (GTQSSGKS) is G1 motif. 32-40 (GTQSSGKSS) provides a ligand contact to GTP. The G2 motif stretch occupies residues 58 to 60 (VTR). The interval 74–93 (DKRKTTGEENDPATWKNSRH) is disordered. Positions 159 to 162 (DLPG) are G3 motif. Residues 228–231 (TKLD) form a G4 motif region. GTP contacts are provided by residues 228–234 (TKLDLMD) and 259–262 (NRSQ). A G5 motif region spans residues 258-261 (VNRS). The tract at residues 357 to 502 (YCNTIEGTAK…NEMVHNLVAI (146 aa)) is middle domain. Residues 461-698 (NYSTQELLRF…NHVKDTLQSE (238 aa)) are interaction with GSK3B. The segment at 515 to 582 (ADACGLMNNN…IQESRRETKN (68 aa)) is b domain. The interval 536–604 (ELPSAVSRDK…QEPTTGNWRG (69 aa)) is disordered. Residue Ser-542 is modified to Phosphoserine. Residues Lys-545 and Lys-548 each participate in a glycyl lysine isopeptide (Lys-Gly) (interchain with G-Cter in SUMO) cross-link. Low complexity predominate over residues 550-567 (PSALAPASQEPSPAASAE). Ser-561 is modified (phosphoserine). Positions 568 to 581 (ADGKLIQESRRETK) are enriched in basic and acidic residues. Residues Lys-571 and Lys-581 each participate in a glycyl lysine isopeptide (Lys-Gly) (interchain with G-Cter in SUMO) cross-link. O-linked (GlcNAc) threonine glycosylation is found at Thr-598 and Thr-599. A Glycyl lysine isopeptide (Lys-Gly) (interchain with G-Cter in SUMO) cross-link involves residue Lys-607. Lys-610 carries the N6-acetyllysine; alternate modification. Lys-610 is covalently cross-linked (Glycyl lysine isopeptide (Lys-Gly) (interchain with G-Cter in SUMO); alternate). Lys-619 participates in a covalent cross-link: Glycyl lysine isopeptide (Lys-Gly) (interchain with G-Cter in SUMO). Residue Ser-620 is modified to Phosphoserine. Residue Lys-621 forms a Glycyl lysine isopeptide (Lys-Gly) (interchain with G-Cter in SUMO) linkage. At Ser-629 the chain carries Phosphoserine; by CDK1 and PINK1. At Ser-650 the chain carries Phosphoserine; by CAMK1 and PKA. S-nitrosocysteine is present on Cys-657. The 92-residue stretch at 657-748 (CEVIERLIKS…IIAEIRETHL (92 aa)) folds into the GED domain. The tract at residues 667 to 681 (YFLIVRKNIQDSVPK) is important for homodimerization.

This sequence belongs to the TRAFAC class dynamin-like GTPase superfamily. Dynamin/Fzo/YdjA family. In terms of assembly, homotetramer; dimerizes through the N-terminal GTP-middle region of one molecule binding to the GED domain of another DNM1L molecule. Oligomerizes in a GTP-dependent manner to form membrane-associated tubules with a spiral pattern. Interacts with GSK3B and MARCHF5. Interacts (via the GTPase and B domains) with UBE2I; the interaction promotes sumoylation of DNM1L, mainly in its B domain. Interacts with PPP3CA; the interaction dephosphorylates DNM1L and regulates its transition to mitochondria. Interacts with BCL2L1 isoform BCL-X(L) and CLTA; DNM1L and BCL2L1 isoform BCL-X(L) may form a complex in synaptic vesicles that also contains clathrin and MFF. Interacts with MFF; the interaction is inhinited by C11orf65/MFI. Interacts with FIS1. Interacts with MIEF2 and MIEF1; GTP-dependent, regulates GTP hydrolysis and DNM1L oligomerization. Interacts with PGAM5; this interaction leads to dephosphorylation at Ser-656 and activation of GTPase activity and eventually to mitochondria fragmentation. Interacts with RALBP1; during mitosis, recruits DNM1L to the mitochondrion and mediates its activation by the mitotic kinase cyclin B-CDK1. Post-translationally, phosphorylation/dephosphorylation events on two sites near the GED domain regulate mitochondrial fission. Phosphorylation on Ser-650 by CAMK1 and PKA inhibits the GTPase activity, leading to a defect in mitochondrial fission promoting mitochondrial elongation. Dephosphorylated on this site by PPP3CA which promotes mitochondrial fission. Phosphorylation on Ser-629 by CDK1 and PINK1 activates the GTPase activity and promotes mitochondrial fission. Phosphorylated in a circadian manner at Ser-650. In terms of processing, sumoylated on various lysine residues within the B domain, probably by MUL1. Sumoylation positively regulates mitochondrial fission. Desumoylated by SENP5 during G2/M transition of mitosis. Appears to be linked to its catalytic activity. S-nitrosylation increases DNM1L dimerization, mitochondrial fission and causes neuronal damage. Post-translationally, O-GlcNAcylation augments the level of the GTP-bound active form of DNM1L and induces translocation from the cytoplasm to mitochondria in cardiomyocytes. It also decreases phosphorylation at Ser-650. In terms of processing, ubiquitination by MARCHF5 affects mitochondrial morphology.

It localises to the cytoplasm. Its subcellular location is the cytosol. The protein resides in the golgi apparatus. It is found in the endomembrane system. The protein localises to the mitochondrion outer membrane. It localises to the peroxisome. Its subcellular location is the membrane. The protein resides in the clathrin-coated pit. It is found in the cytoplasmic vesicle. The protein localises to the secretory vesicle. It localises to the synaptic vesicle membrane. It catalyses the reaction GTP + H2O = GDP + phosphate + H(+). In terms of biological role, functions in mitochondrial and peroxisomal division. Mediates membrane fission through oligomerization into membrane-associated tubular structures that wrap around the scission site to constrict and sever the mitochondrial membrane through a GTP hydrolysis-dependent mechanism. The specific recruitment at scission sites is mediated by membrane receptors like MFF, MIEF1 and MIEF2 for mitochondrial membranes. While the recruitment by the membrane receptors is GTP-dependent, the following hydrolysis of GTP induces the dissociation from the receptors and allows DNM1L filaments to curl into closed rings that are probably sufficient to sever a double membrane. Acts downstream of PINK1 to promote mitochondrial fission in a PRKN-dependent manner. Plays an important role in mitochondrial fission during mitosis. Through its function in mitochondrial division, ensures the survival of at least some types of postmitotic neurons, including Purkinje cells, by suppressing oxidative damage. Required for normal brain development, including that of cerebellum. Facilitates developmentally regulated apoptosis during neural tube formation. Required for a normal rate of cytochrome c release and caspase activation during apoptosis; this requirement may depend upon the cell type and the physiological apoptotic cues. Required for formation of endocytic vesicles. Proposed to regulate synaptic vesicle membrane dynamics through association with BCL2L1 isoform Bcl-X(L) which stimulates its GTPase activity in synaptic vesicles; the function may require its recruitment by MFF to clathrin-containing vesicles. Required for programmed necrosis execution. Rhythmic control of its activity following phosphorylation at Ser-650 is essential for the circadian control of mitochondrial ATP production. The chain is Dynamin-1-like protein from Bos taurus (Bovine).